The sequence spans 347 residues: 3-isopropylmalate dehydrogenase (347 aa).

Residues Arg94, Arg104, Arg128, and Asp219 each contribute to the substrate site. Mg(2+)-binding residues include Asp219, Asp243, and Asp247. 279–291 (GSAPDIAGQGKAD) serves as a coordination point for NAD(+).

It belongs to the isocitrate and isopropylmalate dehydrogenases family. LeuB type 2 subfamily. In terms of assembly, homodimer. Mg(2+) serves as cofactor. The cofactor is Mn(2+).

The protein localises to the cytoplasm. The catalysed reaction is (2R,3S)-3-isopropylmalate + NAD(+) = 4-methyl-2-oxopentanoate + CO2 + NADH. Its pathway is amino-acid biosynthesis; L-leucine biosynthesis; L-leucine from 3-methyl-2-oxobutanoate: step 3/4. Functionally, catalyzes the oxidation of 3-carboxy-2-hydroxy-4-methylpentanoate (3-isopropylmalate) to 3-carboxy-4-methyl-2-oxopentanoate. The product decarboxylates to 4-methyl-2 oxopentanoate. The protein is 3-isopropylmalate dehydrogenase of Streptomyces avermitilis (strain ATCC 31267 / DSM 46492 / JCM 5070 / NBRC 14893 / NCIMB 12804 / NRRL 8165 / MA-4680).